The sequence spans 153 residues: ORM1-like protein 1 (153 aa).

Topologically, residues 1-26 are cytoplasmic; the sequence is MNVGVAHSEVNPNTRVMNSRGMWLTY. Helical transmembrane passes span 27–46 and 47–67; these read ALGV…FSVP and VAWT…LHAV. Residues 68 to 100 lie on the Cytoplasmic side of the membrane; the sequence is KGTPFETPDQGKARLLTHWEQLDYGVQFTSSRK. Residues 101 to 121 traverse the membrane as a helical segment; sequence FLTISPIILYFLASFYTKYDP. The Extracellular portion of the chain corresponds to 122–123; the sequence is TH. The helical transmembrane segment at 124–144 threads the bilayer; sequence FFINTASLLSVLIPKLPQLHG. Residues 145 to 153 are Cytoplasmic-facing; that stretch reads VRIFGINKY.

The protein belongs to the ORM family. In terms of assembly, ceramide-sensitive subunit of the serine palmitoyltransferase (SPT) complex, which is also composed of SPTLC1, SPTLC2/3 and SPTSSA/B.

It is found in the endoplasmic reticulum membrane. Functionally, plays an essential role in the homeostatic regulation of sphingolipid de novo biosynthesis by modulating the activity of the serine palmitoyltransferase (SPT) in response to ceramide levels. When complexed to SPT, the binding of ceramides to its N-terminus stabilizes a conformation that block SPT substrate entry, hence preventing SPT catalytic activity. Through this mechanism, maintains ceramide levels at sufficient concentrations for the production of complex sphingolipids, but which prevents the accumulation of ceramides to levels that trigger apoptosis. This is ORM1-like protein 1 (ormdl1) from Xenopus laevis (African clawed frog).